The following is a 369-amino-acid chain: Nuclear pore complex-interacting protein family member A7 (369 aa).

The tract at residues 151 to 171 is disordered; the sequence is SMKEREHREEERQVSEAEENG.

The protein belongs to the NPIP family.

This is Nuclear pore complex-interacting protein family member A7 (NPIPA7) from Homo sapiens (Human).